We begin with the raw amino-acid sequence, 1213 residues long: DNA-directed RNA polymerase subunit beta' (1213 aa).

Zn(2+) is bound by residues C60, C62, C75, and C78. 3 residues coordinate Mg(2+): D449, D451, and D453. 4 residues coordinate Zn(2+): C818, C892, C899, and C902.

The protein belongs to the RNA polymerase beta' chain family. As to quaternary structure, the RNAP catalytic core consists of 2 alpha, 1 beta, 1 beta' and 1 omega subunit. When a sigma factor is associated with the core the holoenzyme is formed, which can initiate transcription. Requires Mg(2+) as cofactor. Zn(2+) is required as a cofactor.

The enzyme catalyses RNA(n) + a ribonucleoside 5'-triphosphate = RNA(n+1) + diphosphate. In terms of biological role, DNA-dependent RNA polymerase catalyzes the transcription of DNA into RNA using the four ribonucleoside triphosphates as substrates. This chain is DNA-directed RNA polymerase subunit beta', found in Lactiplantibacillus plantarum (strain ATCC BAA-793 / NCIMB 8826 / WCFS1) (Lactobacillus plantarum).